The chain runs to 193 residues: Dual-action ribosomal maturation protein DarP (193 aa).

The span at 1–10 (MRGRDEDTGE) shows a compositional bias: basic and acidic residues. Disordered regions lie at residues 1 to 20 (MRGR…SQQR) and 171 to 193 (QEQG…EDDE). The segment covering 181 to 193 (GLEDGESALEDDE) has biased composition (acidic residues).

This sequence belongs to the DarP family.

Its subcellular location is the cytoplasm. Its function is as follows. Member of a network of 50S ribosomal subunit biogenesis factors which assembles along the 30S-50S interface, preventing incorrect 23S rRNA structures from forming. Promotes peptidyl transferase center (PTC) maturation. The sequence is that of Dual-action ribosomal maturation protein DarP from Xanthomonas oryzae pv. oryzae (strain KACC10331 / KXO85).